Here is a 469-residue protein sequence, read N- to C-terminus: Programmed cell death protein 4 (469 aa).

Residue M1 is modified to N-acetylmethionine. Disordered regions lie at residues 1–38 and 58–128; these read MDVE…EIKN and KAKR…GTPG. Residue S25 is modified to Phosphoserine. A Nuclear localization signal motif is present at residues 58 to 64; the sequence is KAKRRLR. S67 carries the post-translational modification Phosphoserine; by PKB and RPS6KB1. A phosphoserine mark is found at S68, S71, S76, S78, S80, and S94. The short motif at 70 to 76 is the Phosphodegron element; it reads DSGRGDS. Positions 74-83 are enriched in low complexity; sequence GDSVSDSGSD. Residues 114–125 are compositionally biased toward gly residues; sequence KKGGAGGKGVWG. Residue Y152 is modified to Phosphotyrosine. Positions 163 to 284 constitute an MI 1 domain; sequence AFEKTLTPII…CNTYIDSYKG (122 aa). A Nuclear localization signal motif is present at residues 241 to 250; that stretch reads DKLLKDLPEL. S313 and S317 each carry phosphoserine. The MI 2 domain maps to 326–449; sequence HLVKEIDMLL…SKQLRDLCPS (124 aa). S457 carries the phosphoserine; by PKB modification.

Belongs to the PDCD4 family. In terms of assembly, interacts (via MI domains) with EIF4A2. Interacts (via MI domains) with EIF4A1 (via N-terminal domain). Heterotrimer with EIF4A1; one molecule of PDCD4 binds two molecules of EIF4A1. Interacts with EIF4G1. May form a complex with EIF4A1 and EIF4G1. The interaction between PDCD4 and EIF4A1 interferes with the interaction between EIF4A1 and EIF4G. When phosphorylated, interacts with BTRC and FBXW11. In terms of processing, polyubiquitinated, leading to its proteasomal degradation. Rapidly degraded in response to mitogens. Phosphorylation of the phosphodegron promotes interaction with BTRC and proteasomal degradation. Post-translationally, phosphorylated at Ser-67 by RPS6KB1 in response to mitogens; phosphorylation promotes proteasomal degradation of PDCD4. Up-regulated in proliferative cells. Highly expressed in epithelial cells of the mammary gland. Reduced expression in lung cancer and colon carcinoma.

The protein resides in the nucleus. It localises to the cytoplasm. Its function is as follows. Inhibits translation initiation and cap-dependent translation. May excert its function by hindering the interaction between EIF4A1 and EIF4G. Inhibits the helicase activity of EIF4A. Modulates the activation of JUN kinase. Down-regulates the expression of MAP4K1, thus inhibiting events important in driving invasion, namely, MAPK85 activation and consequent JUN-dependent transcription. May play a role in apoptosis. Tumor suppressor. Inhibits tumor promoter-induced neoplastic transformation. Binds RNA. The protein is Programmed cell death protein 4 (PDCD4) of Homo sapiens (Human).